The following is a 284-amino-acid chain: T-cell leukemia homeobox protein 2 (284 aa).

3 disordered regions span residues 1–50 (MEPG…NGAF), 78–106 (GGVIRVPAHRPLPVPPPAGGAPAVPGPSG), and 139–166 (FSGTRRIGHPYQNRTPPKRKKPRTSFSR). Over residues 30 to 50 (TPGGGLGLGRGGQGHGENGAF) the composition is skewed to gly residues. Residues 87-96 (RPLPVPPPAG) show a composition bias toward pro residues. A DNA-binding region (homeobox) is located at residues 157–216 (RKKPRTSFSRSQVLELERRFLRQKYLASAERAALAKALRMTDAQVKTWFQNRRTKWRRQT).

It localises to the nucleus. In terms of biological role, transcription activator that binds DNA elements with the consensus sequence 5'-CGGTAATTGG-3'. Binds DNA via its homeobox. Required for normal cell death of enteric neurons in the gastrointestinal tract. Required for normal development of the enteric nervous system, and for proper development of normal motility of the gastrointestinal tract. The sequence is that of T-cell leukemia homeobox protein 2 (TLX2) from Homo sapiens (Human).